Consider the following 144-residue polypeptide: Intraflagellar transport protein 25 homolog (144 aa).

Ca(2+) is bound by residues Asn29, Asp32, and Thr37.

The protein belongs to the IFT25 family. As to quaternary structure, component of the IFT complex B, at least composed of IFT20, IFT22, IFT25, IFT27, IFT46, IFT52, TRAF3IP1/IFT54, IFT57, IFT74, IFT80, IFT81, and IFT88. Interacts with IFT27. Interacts with IFT88. In terms of tissue distribution, detected in placenta.

It is found in the cell projection. The protein localises to the cilium. Component of the IFT complex B required for sonic hedgehog/SHH signaling. May mediate transport of SHH components: required for the export of SMO and PTCH1 receptors out of the cilium and the accumulation of GLI2 at the ciliary tip in response to activation of the SHH pathway, suggesting it is involved in the dynamic transport of SHH signaling molecules within the cilium. Not required for ciliary assembly. Its role in intraflagellar transport is mainly seen in tissues rich in ciliated cells such as kidney and testis. Essential for male fertility, spermiogenesis and sperm flagella formation. Plays a role in the early development of the kidney. May be involved in the regulation of ureteric bud initiation. In Homo sapiens (Human), this protein is Intraflagellar transport protein 25 homolog.